A 360-amino-acid chain; its full sequence is DNA replication and repair protein RecF (360 aa).

Position 30 to 37 (30 to 37 (GHNGSGKT)) interacts with ATP.

The protein belongs to the RecF family.

The protein resides in the cytoplasm. The RecF protein is involved in DNA metabolism; it is required for DNA replication and normal SOS inducibility. RecF binds preferentially to single-stranded, linear DNA. It also seems to bind ATP. The protein is DNA replication and repair protein RecF of Shewanella denitrificans (strain OS217 / ATCC BAA-1090 / DSM 15013).